The sequence spans 990 residues: Nucleotide-binding leucine-rich repeat (NLR)-like protein (990 aa).

The purine nucleoside phosphorylase domain stretch occupies residues Gly-22–Leu-304. The region spanning Arg-334–Glu-563 is the NB-ARC domain. TPR repeat units follow at residues Arg-732 to Ala-765, Ile-774 to Val-807, Leu-816 to Ala-849, Leu-858 to Thr-891, Leu-900 to Val-933, and Leu-942 to Asp-975. The segment at Gln-965 to Lys-990 is disordered. A compositionally biased stretch (basic residues) spans Lys-981 to Lys-990.

The enzyme catalyses ATP + H2O = D-ribose 5-triphosphate + adenine. It catalyses the reaction dATP + H2O = 2-deoxyribose 5-triphosphate + adenine. Its function is as follows. The N-terminal purine nucleoside phosphorylase (PNP) domain cleaves the N-glycosidic bond of ATP, and to a lesser extent dATP; has very weak activity on adenosine and deoxyadenosine and no activity on (d)ADP or (d)AMP. The chain is Nucleotide-binding leucine-rich repeat (NLR)-like protein from Hyaloscypha variabilis (strain UAMH 11265 / GT02V1 / F) (Meliniomyces variabilis).